Reading from the N-terminus, the 116-residue chain is Large ribosomal subunit protein bL17 (116 aa).

The protein belongs to the bacterial ribosomal protein bL17 family. Part of the 50S ribosomal subunit. Contacts protein L32.

This Helicobacter pylori (strain G27) protein is Large ribosomal subunit protein bL17.